Reading from the N-terminus, the 464-residue chain is Multifunctional dye peroxidase DyP2 (464 aa).

Aspartate 203 functions as the Proton acceptor in the catalytic mechanism. The Mn(2+) site is built by glutamate 258, glutamate 273, and glutamate 284. Histidine 321 serves as a coordination point for heme.

Belongs to the DyP-type peroxidase family. Exists both as a monomeric and oligomeric species in solution; the monomeric form contains no bound heme cofactor and is inactive. Requires heme b as cofactor. Mn(2+) serves as cofactor.

Its subcellular location is the secreted. The catalysed reaction is 1-(4-hydroxy-3-methoxyphenyl)-2-(2-methoxyphenoxy)propane-1,3-diol + H2O2 = guaiacol + vanillin + glycolaldehyde + H2O. The enzyme catalyses 2 Mn(2+) + H2O2 + 2 H(+) = 2 Mn(3+) + 2 H2O. It catalyses the reaction 2 a phenolic donor + H2O2 = 2 a phenolic radical donor + 2 H2O. It carries out the reaction Reactive Blue 5 + 2 H2O2 = 2,2'-disulfonyl azobenzene + 3-[(4-amino-6-chloro-1,3,5-triazin-2-yl)amino]benzenesulfonate + phthalate + 2 H2O + 2 H(+). Its function is as follows. Displays both high peroxidase and manganese peroxidase activity. Is likely involved in lignin degradation. Also has a Mn-dependent oxidase mode of action that expands its substrate scope in vitro; is thus able to catalyze the O(2)- and Mn-dependent oxidative decarboxylation of 4-methoxymandelate to anisaldehyde. This chain is Multifunctional dye peroxidase DyP2, found in Amycolatopsis sp. (strain ATCC 39116 / 75iv2).